We begin with the raw amino-acid sequence, 792 residues long: LPS-assembly protein LptD (792 aa).

A signal peptide spans 1 to 22 (MYRVLRLLPLPLSVAISLSALA).

It belongs to the LptD family. As to quaternary structure, component of the lipopolysaccharide transport and assembly complex. Interacts with LptE and LptA.

It localises to the cell outer membrane. Functionally, together with LptE, is involved in the assembly of lipopolysaccharide (LPS) at the surface of the outer membrane. In Xylella fastidiosa (strain 9a5c), this protein is LPS-assembly protein LptD.